The following is a 206-amino-acid chain: Cytidylate kinase (206 aa).

Position 7–15 (7–15) interacts with ATP; that stretch reads GVAASGKSS.

Belongs to the cytidylate kinase family. Type 1 subfamily.

The protein localises to the cytoplasm. The catalysed reaction is CMP + ATP = CDP + ADP. It catalyses the reaction dCMP + ATP = dCDP + ADP. The chain is Cytidylate kinase from Deinococcus radiodurans (strain ATCC 13939 / DSM 20539 / JCM 16871 / CCUG 27074 / LMG 4051 / NBRC 15346 / NCIMB 9279 / VKM B-1422 / R1).